The primary structure comprises 498 residues: Hexokinase-1 (498 aa).

Positions 39–492 (AAAQRVVAEL…SGLGAALVAA (454 aa)) constitute a Hexokinase domain. Residues 95-233 (TGGEEGSYYA…GLDMRVSALI (139 aa)) are hexokinase small subdomain. Residues G109, T110, and N111 each coordinate ADP. D-glucose-binding residues include T199, K200, N234, and D235. Positions 234–481 (NDTVGTLAAG…ERVVVKLASD (248 aa)) are hexokinase large subdomain. Residue T258 participates in ADP binding. Residues N261, E290, and E321 each coordinate D-glucose. Residue G446 participates in ADP binding.

Belongs to the hexokinase family. Highly expressed in senescent leaves.

It catalyses the reaction a D-hexose + ATP = a D-hexose 6-phosphate + ADP + H(+). The enzyme catalyses D-fructose + ATP = D-fructose 6-phosphate + ADP + H(+). The catalysed reaction is D-glucose + ATP = D-glucose 6-phosphate + ADP + H(+). It participates in carbohydrate metabolism; hexose metabolism. The protein operates within carbohydrate degradation; glycolysis; D-glyceraldehyde 3-phosphate and glycerone phosphate from D-glucose: step 1/4. Functionally, fructose and glucose phosphorylating enzyme. Acts as a positive regulator of leaf senescence by mediating glucose accumulation and inducing an increase in reactive oxygen species (ROS). This is Hexokinase-1 (HXK1) from Oryza sativa subsp. japonica (Rice).